Reading from the N-terminus, the 293-residue chain is Formamidopyrimidine-DNA glycosylase (293 aa).

Proline 2 acts as the Schiff-base intermediate with DNA in catalysis. Glutamate 3 serves as the catalytic Proton donor. Lysine 58 functions as the Proton donor; for beta-elimination activity in the catalytic mechanism. DNA is bound by residues histidine 104, arginine 123, and arginine 166. An FPG-type zinc finger spans residues 257-293; that stretch reads AVYDREGEPCRSKGCDGVVKRFVQNGRSTFWCPKCQK. Residue arginine 283 is the Proton donor; for delta-elimination activity of the active site.

Belongs to the FPG family. As to quaternary structure, monomer. It depends on Zn(2+) as a cofactor.

It catalyses the reaction Hydrolysis of DNA containing ring-opened 7-methylguanine residues, releasing 2,6-diamino-4-hydroxy-5-(N-methyl)formamidopyrimidine.. It carries out the reaction 2'-deoxyribonucleotide-(2'-deoxyribose 5'-phosphate)-2'-deoxyribonucleotide-DNA = a 3'-end 2'-deoxyribonucleotide-(2,3-dehydro-2,3-deoxyribose 5'-phosphate)-DNA + a 5'-end 5'-phospho-2'-deoxyribonucleoside-DNA + H(+). Functionally, involved in base excision repair of DNA damaged by oxidation or by mutagenic agents. Acts as a DNA glycosylase that recognizes and removes damaged bases. Has a preference for oxidized purines, such as 7,8-dihydro-8-oxoguanine (8-oxoG). Has AP (apurinic/apyrimidinic) lyase activity and introduces nicks in the DNA strand. Cleaves the DNA backbone by beta-delta elimination to generate a single-strand break at the site of the removed base with both 3'- and 5'-phosphates. In Rhodopseudomonas palustris (strain BisB18), this protein is Formamidopyrimidine-DNA glycosylase.